A 220-amino-acid chain; its full sequence is Inner membrane protein YqjA (220 aa).

Residues 1 to 27 (MELLTQLLQALWAQDFETLANPSMIGM) are Periplasmic-facing. The chain crosses the membrane as a helical span at residues 28–48 (LYFVLFVILFLENGLLPAAFL). Over 49–52 (PGDS) the chain is Cytoplasmic. The next 2 helical transmembrane spans lie at 53–73 (LLVL…QTIL) and 74–94 (LLTV…RWLG). Residues 95–154 (NTRTVQNWLSHLPAHYHQRAHHLFHKHGLSALLIGRFIAFVRTLLPTIAGLSGLNNARFQ) lie on the Cytoplasmic side of the membrane. The helical transmembrane segment at 155 to 175 (FFNWMSGLLWVLILTTLGYML) threads the bilayer. The Periplasmic segment spans residues 176 to 191 (GKTPVFLKYEDQLMSC). The chain crosses the membrane as a helical span at residues 192 to 212 (LMLLPVVLLVFGLAGSLVVLW). Over 213-220 (KKKYGNRG) the chain is Cytoplasmic.

It belongs to the DedA family.

The protein resides in the cell inner membrane. May be a membrane transporter required for proton motive force (PMF)-dependent drug efflux. Required, with YghB, for the proper export of certain periplasmic amidases and, possibly, other Tat substrates. May play a role in determining membrane lipid composition. The sequence is that of Inner membrane protein YqjA (yqjA) from Escherichia coli (strain K12).